Here is a 652-residue protein sequence, read N- to C-terminus: Acetyl-coenzyme A synthetase (652 aa).

Residues 191-194 (RAGR), Thr-311, and Asn-335 contribute to the CoA site. Residues 387 to 389 (GEP), 411 to 416 (DTWWQT), Asp-500, and Arg-515 contribute to the ATP site. Ser-523 lines the CoA pocket. Residue Arg-526 coordinates ATP. Residues Val-537, His-539, and Ile-542 each contribute to the Mg(2+) site. Residue Arg-584 participates in CoA binding. Lys-609 bears the N6-acetyllysine mark.

The protein belongs to the ATP-dependent AMP-binding enzyme family. The cofactor is Mg(2+). Post-translationally, acetylated. Deacetylation by the SIR2-homolog deacetylase activates the enzyme.

It catalyses the reaction acetate + ATP + CoA = acetyl-CoA + AMP + diphosphate. Functionally, catalyzes the conversion of acetate into acetyl-CoA (AcCoA), an essential intermediate at the junction of anabolic and catabolic pathways. Acs undergoes a two-step reaction. In the first half reaction, Acs combines acetate with ATP to form acetyl-adenylate (AcAMP) intermediate. In the second half reaction, it can then transfer the acetyl group from AcAMP to the sulfhydryl group of CoA, forming the product AcCoA. In terms of biological role, enables the cell to use acetate during aerobic growth to generate energy via the TCA cycle, and biosynthetic compounds via the glyoxylate shunt. Acetylates CheY, the response regulator involved in flagellar movement and chemotaxis. In Sodalis glossinidius (strain morsitans), this protein is Acetyl-coenzyme A synthetase.